The primary structure comprises 360 residues: Photosystem II protein D1 2 (360 aa).

3 helical membrane passes run 29 to 46 (YVGW…TATI), 118 to 133 (HFLI…EWEL), and 142 to 156 (WICV…AATA). Chlorophyll a is bound at residue H118. Residue Y126 participates in pheophytin a binding. 2 residues coordinate [CaMn4O5] cluster: D170 and E189. The chain crosses the membrane as a helical span at residues 197–218 (FHMLGVAGVFGGSLFSAMHGSL). H198 provides a ligand contact to chlorophyll a. A quinone-binding positions include H215 and 264-265 (SF). Residue H215 coordinates Fe cation. H272 is a binding site for Fe cation. The helical transmembrane segment at 274–288 (FLAAWPVVGIWFTSL) threads the bilayer. Positions 332, 333, 342, and 344 each coordinate [CaMn4O5] cluster. Residues 345 to 360 (AGEATPVALTAPAING) constitute a propeptide that is removed on maturation.

Belongs to the reaction center PufL/M/PsbA/D family. In terms of assembly, PSII is composed of 1 copy each of membrane proteins PsbA, PsbB, PsbC, PsbD, PsbE, PsbF, PsbH, PsbI, PsbJ, PsbK, PsbL, PsbM, PsbT, PsbX, PsbY, PsbZ, Psb30/Ycf12, peripheral proteins PsbO, CyanoQ (PsbQ), PsbU, PsbV and a large number of cofactors. It forms dimeric complexes. The D1/D2 heterodimer binds P680, chlorophylls that are the primary electron donor of PSII, and subsequent electron acceptors. It shares a non-heme iron and each subunit binds pheophytin, quinone, additional chlorophylls, carotenoids and lipids. D1 provides most of the ligands for the Mn4-Ca-O5 cluster of the oxygen-evolving complex (OEC). There is also a Cl(-1) ion associated with D1 and D2, which is required for oxygen evolution. The PSII complex binds additional chlorophylls, carotenoids and specific lipids. is required as a cofactor. Post-translationally, tyr-161 forms a radical intermediate that is referred to as redox-active TyrZ, YZ or Y-Z. In terms of processing, C-terminally processed by CtpA; processing is essential to allow assembly of the oxygen-evolving complex and thus photosynthetic growth.

The protein resides in the cellular thylakoid membrane. It carries out the reaction 2 a plastoquinone + 4 hnu + 2 H2O = 2 a plastoquinol + O2. Photosystem II (PSII) is a light-driven water:plastoquinone oxidoreductase that uses light energy to abstract electrons from H(2)O, generating O(2) and a proton gradient subsequently used for ATP formation. It consists of a core antenna complex that captures photons, and an electron transfer chain that converts photonic excitation into a charge separation. The D1/D2 (PsbA/PsbD) reaction center heterodimer binds P680, the primary electron donor of PSII as well as several subsequent electron acceptors. This chain is Photosystem II protein D1 2, found in Synechococcus elongatus (strain ATCC 33912 / PCC 7942 / FACHB-805) (Anacystis nidulans R2).